A 573-amino-acid chain; its full sequence is MRYSQYFIPTVKETPSDAEVISHKLMLRAGMIRKLAAGIYNYLPFGLRSIRKVEAIVREEMNRAGAIELLMPAVQPAELWKESGRWEFYGKELLRFNDRKDAEFCMGPTHEEVITDLIRKEVRSYRQLPINLYQIQGKFRDEIRPRFGLMRGREFIMKDAYSFDVNEAGADVSYEKMYKAYRRIFERCGLKFRAVEADTGTIGGNYSHEFMVLADSGEDAIVSCSACEYAANMEKAETRKGEGIEHADPRPMEHVSTPGQKSIEDVAAFLGVQNTQVVKTLVLVADGEPVVALIRGDYDLNEIKLKNHLGCAELEMAEDDVVVKVTGAPTGYAGPVGLAAKVKVVADLSLEGMHNFVTGANAADTHLKNVNIGRDFSVSGFVDIRNVVIGDACPRCDSGKLEIWRGIEVGHVFKLGTKYSKALKATFLDADGKEQTIFMGCYGIGVGRTVAACIEQNHDENGIIFPIPIAPFQCIISSLSVKEDEVKAASESIYQELLEAGIEVLLDDRDERPGFKFKDADLIGIPLRIVVGAKALAEGKVELKERRSGEVEVLPIAEAIAKVKAAVKEALQV.

The protein belongs to the class-II aminoacyl-tRNA synthetase family. ProS type 1 subfamily. As to quaternary structure, homodimer.

The protein resides in the cytoplasm. It catalyses the reaction tRNA(Pro) + L-proline + ATP = L-prolyl-tRNA(Pro) + AMP + diphosphate. In terms of biological role, catalyzes the attachment of proline to tRNA(Pro) in a two-step reaction: proline is first activated by ATP to form Pro-AMP and then transferred to the acceptor end of tRNA(Pro). As ProRS can inadvertently accommodate and process non-cognate amino acids such as alanine and cysteine, to avoid such errors it has two additional distinct editing activities against alanine. One activity is designated as 'pretransfer' editing and involves the tRNA(Pro)-independent hydrolysis of activated Ala-AMP. The other activity is designated 'posttransfer' editing and involves deacylation of mischarged Ala-tRNA(Pro). The misacylated Cys-tRNA(Pro) is not edited by ProRS. The sequence is that of Proline--tRNA ligase from Geobacter sp. (strain M21).